The chain runs to 216 residues: Ribosomal RNA large subunit methyltransferase E (216 aa).

Gly-60, Trp-62, Asp-80, Asp-96, and Asp-121 together coordinate S-adenosyl-L-methionine. Lys-161 acts as the Proton acceptor in catalysis.

Belongs to the class I-like SAM-binding methyltransferase superfamily. RNA methyltransferase RlmE family.

It localises to the cytoplasm. The enzyme catalyses uridine(2552) in 23S rRNA + S-adenosyl-L-methionine = 2'-O-methyluridine(2552) in 23S rRNA + S-adenosyl-L-homocysteine + H(+). In terms of biological role, specifically methylates the uridine in position 2552 of 23S rRNA at the 2'-O position of the ribose in the fully assembled 50S ribosomal subunit. The chain is Ribosomal RNA large subunit methyltransferase E from Pseudomonas savastanoi pv. phaseolicola (strain 1448A / Race 6) (Pseudomonas syringae pv. phaseolicola (strain 1448A / Race 6)).